We begin with the raw amino-acid sequence, 602 residues long: Glutathione-regulated potassium-efflux system protein KefB (602 aa).

The next 13 helical transmembrane spans lie at 4-24, 29-49, 55-75, 87-107, 115-135, 152-172, 181-201, 207-227, 230-250, 261-281, 296-318, 326-346, and 356-376; these read TGLL…VPIA, IGAV…GLGF, EILH…GLEL, IFGV…ALLY, AAVI…LQLM, VLLF…ILAG, VKIG…RYLL, YIVA…VVLG, LFMD…GILL, IAIE…VGMA, LGVL…VFGL, FAGV…AAFS, and ALLL…MQVI. The RCK N-terminal domain occupies 400–519; the sequence is DPQVIIVGFG…NGVKDFTRET (120 aa).

It belongs to the monovalent cation:proton antiporter 2 (CPA2) transporter (TC 2.A.37) family. KefB subfamily. Interacts with the regulatory subunit KefG.

It is found in the cell inner membrane. Functionally, pore-forming subunit of a potassium efflux system that confers protection against electrophiles. Catalyzes K(+)/H(+) antiport. The chain is Glutathione-regulated potassium-efflux system protein KefB from Yersinia pestis bv. Antiqua (strain Antiqua).